Consider the following 362-residue polypeptide: Manganese peroxidase 3 (362 aa).

Residues 1–18 (MAFKQLLTAISIVSVANA) form the signal peptide. The propeptide occupies 19–23 (ALTRR). 4 cysteine pairs are disulfide-bonded: C26-C39, C38-C309, C58-C144, and C273-C338. Residues E60 and E64 each contribute to the Mn(2+) site. Residue H71 is the Proton acceptor of the active site. Residues D72, G90, D92, and S94 each contribute to the Ca(2+) site. The N-linked (GlcNAc...) asparagine glycan is linked to N126. A heme b-binding site is contributed by H200. A Ca(2+)-binding site is contributed by T201. D206 serves as a coordination point for Mn(2+). The Ca(2+) site is built by D218, T220, I223, and D225. The segment at 341–362 (TPFPSLSADPGPATSVAPVPPS) is disordered.

It belongs to the peroxidase family. Ligninase subfamily. Heme b is required as a cofactor. Ca(2+) serves as cofactor.

It is found in the secreted. The catalysed reaction is 2 Mn(2+) + H2O2 + 2 H(+) = 2 Mn(3+) + 2 H2O. Functionally, catalyzes the oxidation of Mn(2+) to Mn(3+). The latter, acting as a diffusible redox mediator, is capable of oxidizing a variety of lignin compounds. This isozyme is also able to oxidize phenols and amines in the absence of Mn(2+), similar to versatile peroxidases. The polypeptide is Manganese peroxidase 3 (mnp3) (Phlebia radiata (White-rot fungus)).